A 519-amino-acid polypeptide reads, in one-letter code: Sorting nexin-2 (519 aa).

Disordered stretches follow at residues 1–20 and 30–103; these read MAAE…DFEE and STVS…VTPV. Low complexity-rich tracts occupy residues 30–44 and 93–103; these read STVS…SPDP and SSETSPAVTPV. Position 97 is a phosphoserine (serine 97). Phosphothreonine is present on residues threonine 101 and threonine 104. 2 positions are modified to phosphoserine: serine 117 and serine 119. In terms of domain architecture, PX spans 140–269; it reads FDIEIGVSDP…QFLESSELPR (130 aa). Residues arginine 183, serine 185, lysine 211, and arginine 235 each coordinate a 1,2-diacyl-sn-glycero-3-phospho-(1D-myo-inositol-3-phosphate). The residue at position 185 (serine 185) is a Phosphoserine. The tract at residues 260-519 is interaction with RhoG; it reads QFLESSELPR…AFLPEAKAIA (260 aa). The residue at position 277 (serine 277) is a Phosphoserine. Residues 278-295 form a membrane-binding amphipathic helix region; that stretch reads GAGILRMVNKAADAVNKM. A BAR domain is found at 299–519; the sequence is MNESDAWFEE…AFLPEAKAIA (221 aa). Residue lysine 469 is modified to N6-acetyllysine.

The protein belongs to the sorting nexin family. In terms of assembly, predominantly forms heterodimers with BAR domain-containing sorting nexins SNX5, SNX6 and SNX32; can self-associate to form homodimers. The heterodimers are proposed to self-assemble into helical arrays on the membrane to stabilize and expand local membrane curvature underlying endosomal tubule formation. Thought to be a component of the originally described retromer complex (also called SNX-BAR retromer) which is a pentamer containing the heterotrimeric retromer cargo-selective complex (CSC), also decribed as vacuolar protein sorting subcomplex (VPS) and a heterodimeric membrane-deforming subcomplex formed between SNX1 or SNX2 and SNX5 or SNX6 (also called SNX-BAR subcomplex); the respective CSC and SNX-BAR subcomplexes associate with low affinity. Interacts with SNX5, SNX6, SNX32, VPS26A, VPS29, VPS35, FNBP1, KALRN, RHOG (GDP-bound form).

It localises to the early endosome membrane. It is found in the cell projection. The protein resides in the lamellipodium. Involved in several stages of intracellular trafficking. Interacts with membranes containing phosphatidylinositol 3-phosphate (PtdIns(3P)) or phosphatidylinositol 3,5-bisphosphate (PtdIns(3,5)P2). Acts in part as component of the retromer membrane-deforming SNX-BAR subcomplex. The SNX-BAR retromer mediates retrograde transport of cargo proteins from endosomes to the trans-Golgi network (TGN) and is involved in endosome-to-plasma membrane transport for cargo protein recycling. The SNX-BAR subcomplex functions to deform the donor membrane into a tubular profile called endosome-to-TGN transport carrier (ETC). Can sense membrane curvature and has in vitro vesicle-to-membrane remodeling activity. Required for retrograde endosome-to-TGN transport of TGN38. Promotes KALRN- and RHOG-dependent but retromer-independent membrane remodeling such as lamellipodium formation; the function is dependent on GEF activity of KALRN. The polypeptide is Sorting nexin-2 (SNX2) (Bos taurus (Bovine)).